Here is a 179-residue protein sequence, read N- to C-terminus: Large ribosomal subunit protein uL5 (179 aa).

Belongs to the universal ribosomal protein uL5 family. In terms of assembly, part of the 50S ribosomal subunit; part of the 5S rRNA/L5/L18/L25 subcomplex. Contacts the 5S rRNA and the P site tRNA. Forms a bridge to the 30S subunit in the 70S ribosome.

This is one of the proteins that bind and probably mediate the attachment of the 5S RNA into the large ribosomal subunit, where it forms part of the central protuberance. In the 70S ribosome it contacts protein S13 of the 30S subunit (bridge B1b), connecting the 2 subunits; this bridge is implicated in subunit movement. Contacts the P site tRNA; the 5S rRNA and some of its associated proteins might help stabilize positioning of ribosome-bound tRNAs. The chain is Large ribosomal subunit protein uL5 from Bacillus mycoides (strain KBAB4) (Bacillus weihenstephanensis).